A 151-amino-acid polypeptide reads, in one-letter code: 6,7-dimethyl-8-ribityllumazine synthase (151 aa).

5-amino-6-(D-ribitylamino)uracil contacts are provided by residues phenylalanine 23, 55–57 (AYE), and 79–81 (AVI). 84-85 (AT) serves as a coordination point for (2S)-2-hydroxy-3-oxobutyl phosphate. Catalysis depends on histidine 87, which acts as the Proton donor. Position 111 (phenylalanine 111) interacts with 5-amino-6-(D-ribitylamino)uracil. A (2S)-2-hydroxy-3-oxobutyl phosphate-binding site is contributed by arginine 125.

Belongs to the DMRL synthase family.

It catalyses the reaction (2S)-2-hydroxy-3-oxobutyl phosphate + 5-amino-6-(D-ribitylamino)uracil = 6,7-dimethyl-8-(1-D-ribityl)lumazine + phosphate + 2 H2O + H(+). Its pathway is cofactor biosynthesis; riboflavin biosynthesis; riboflavin from 2-hydroxy-3-oxobutyl phosphate and 5-amino-6-(D-ribitylamino)uracil: step 1/2. Catalyzes the formation of 6,7-dimethyl-8-ribityllumazine by condensation of 5-amino-6-(D-ribitylamino)uracil with 3,4-dihydroxy-2-butanone 4-phosphate. This is the penultimate step in the biosynthesis of riboflavin. This chain is 6,7-dimethyl-8-ribityllumazine synthase, found in Leptospira interrogans serogroup Icterohaemorrhagiae serovar Lai (strain 56601).